A 491-amino-acid chain; its full sequence is Ketol-acid reductoisomerase (NADP(+)) (491 aa).

One can recognise a KARI N-terminal Rossmann domain in the interval 15-208; the sequence is AQLGKCRFMG…GGHRAGVLES (194 aa). NADP(+)-binding positions include 45-48, Arg68, Arg76, Ser78, and 108-110; these read CGAQ and DKQ. His132 is a catalytic residue. Gly158 provides a ligand contact to NADP(+). KARI C-terminal knotted domains lie at 209–344 and 345–484; these read SFVA…TAPQ and YEGK…MTDM. Mg(2+) contacts are provided by Asp217, Glu221, Glu389, and Glu393. Substrate is bound at residue Ser414.

It belongs to the ketol-acid reductoisomerase family. Requires Mg(2+) as cofactor.

It carries out the reaction (2R)-2,3-dihydroxy-3-methylbutanoate + NADP(+) = (2S)-2-acetolactate + NADPH + H(+). It catalyses the reaction (2R,3R)-2,3-dihydroxy-3-methylpentanoate + NADP(+) = (S)-2-ethyl-2-hydroxy-3-oxobutanoate + NADPH + H(+). Its pathway is amino-acid biosynthesis; L-isoleucine biosynthesis; L-isoleucine from 2-oxobutanoate: step 2/4. It functions in the pathway amino-acid biosynthesis; L-valine biosynthesis; L-valine from pyruvate: step 2/4. Functionally, involved in the biosynthesis of branched-chain amino acids (BCAA). Catalyzes an alkyl-migration followed by a ketol-acid reduction of (S)-2-acetolactate (S2AL) to yield (R)-2,3-dihydroxy-isovalerate. In the isomerase reaction, S2AL is rearranged via a Mg-dependent methyl migration to produce 3-hydroxy-3-methyl-2-ketobutyrate (HMKB). In the reductase reaction, this 2-ketoacid undergoes a metal-dependent reduction by NADPH to yield (R)-2,3-dihydroxy-isovalerate. The protein is Ketol-acid reductoisomerase (NADP(+)) of Escherichia fergusonii (strain ATCC 35469 / DSM 13698 / CCUG 18766 / IAM 14443 / JCM 21226 / LMG 7866 / NBRC 102419 / NCTC 12128 / CDC 0568-73).